We begin with the raw amino-acid sequence, 100 residues long: Insertion element IS600 uncharacterized 11 kDa protein (100 aa).

The protein belongs to the transposase 8 family.

In Shigella sonnei, this protein is Insertion element IS600 uncharacterized 11 kDa protein.